Reading from the N-terminus, the 220-residue chain is Putative tyrosine-protein phosphatase 1 (220 aa).

Residues 67–218 (FKVPLNAELF…LLARKHVRGQ (152 aa)) enclose the Tyrosine-protein phosphatase domain.

The protein belongs to the protein-tyrosine phosphatase family. Non-receptor class CDC14 subfamily.

It carries out the reaction O-phospho-L-tyrosyl-[protein] + H2O = L-tyrosyl-[protein] + phosphate. Its function is as follows. Could be inactive as the active site cysteine is modified to tryptophan. This is Putative tyrosine-protein phosphatase 1 (PTP-1) from Orgyia pseudotsugata multicapsid polyhedrosis virus (OpMNPV).